We begin with the raw amino-acid sequence, 157 residues long: 6,7-dimethyl-8-ribityllumazine synthase (157 aa).

Residues Phe22, 57–59 (AYE), and 81–83 (TVI) each bind 5-amino-6-(D-ribitylamino)uracil. Residue 86–87 (GT) participates in (2S)-2-hydroxy-3-oxobutyl phosphate binding. Residue His89 is the Proton donor of the active site. Phe114 serves as a coordination point for 5-amino-6-(D-ribitylamino)uracil. Arg128 contributes to the (2S)-2-hydroxy-3-oxobutyl phosphate binding site.

This sequence belongs to the DMRL synthase family. Forms an icosahedral capsid composed of 60 subunits, arranged as a dodecamer of pentamers.

The enzyme catalyses (2S)-2-hydroxy-3-oxobutyl phosphate + 5-amino-6-(D-ribitylamino)uracil = 6,7-dimethyl-8-(1-D-ribityl)lumazine + phosphate + 2 H2O + H(+). It participates in cofactor biosynthesis; riboflavin biosynthesis; riboflavin from 2-hydroxy-3-oxobutyl phosphate and 5-amino-6-(D-ribitylamino)uracil: step 1/2. Its function is as follows. Catalyzes the formation of 6,7-dimethyl-8-ribityllumazine by condensation of 5-amino-6-(D-ribitylamino)uracil with 3,4-dihydroxy-2-butanone 4-phosphate. This is the penultimate step in the biosynthesis of riboflavin. In Pasteurella multocida (strain Pm70), this protein is 6,7-dimethyl-8-ribityllumazine synthase.